The chain runs to 559 residues: Dihydroxy-acid dehydratase (559 aa).

Residue Asp-78 participates in Mg(2+) binding. Residue Cys-119 coordinates [2Fe-2S] cluster. Mg(2+) is bound by residues Asp-120 and Lys-121. The residue at position 121 (Lys-121) is an N6-carboxylysine. Cys-191 is a binding site for [2Fe-2S] cluster. Glu-442 contacts Mg(2+). The active-site Proton acceptor is the Ser-468.

This sequence belongs to the IlvD/Edd family. In terms of assembly, homodimer. The cofactor is [2Fe-2S] cluster. Mg(2+) serves as cofactor.

The enzyme catalyses (2R)-2,3-dihydroxy-3-methylbutanoate = 3-methyl-2-oxobutanoate + H2O. It carries out the reaction (2R,3R)-2,3-dihydroxy-3-methylpentanoate = (S)-3-methyl-2-oxopentanoate + H2O. The protein operates within amino-acid biosynthesis; L-isoleucine biosynthesis; L-isoleucine from 2-oxobutanoate: step 3/4. It functions in the pathway amino-acid biosynthesis; L-valine biosynthesis; L-valine from pyruvate: step 3/4. Its function is as follows. Functions in the biosynthesis of branched-chain amino acids. Catalyzes the dehydration of (2R,3R)-2,3-dihydroxy-3-methylpentanoate (2,3-dihydroxy-3-methylvalerate) into 2-oxo-3-methylpentanoate (2-oxo-3-methylvalerate) and of (2R)-2,3-dihydroxy-3-methylbutanoate (2,3-dihydroxyisovalerate) into 2-oxo-3-methylbutanoate (2-oxoisovalerate), the penultimate precursor to L-isoleucine and L-valine, respectively. The chain is Dihydroxy-acid dehydratase from Agathobacter rectalis (strain ATCC 33656 / DSM 3377 / JCM 17463 / KCTC 5835 / VPI 0990) (Eubacterium rectale).